Consider the following 319-residue polypeptide: Cytochrome f (319 aa).

An N-terminal signal peptide occupies residues Met1 to Ala34. 4 residues coordinate heme: Tyr35, Cys55, Cys58, and His59. The helical transmembrane segment at Val285–Leu304 threads the bilayer.

This sequence belongs to the cytochrome f family. In terms of assembly, the 4 large subunits of the cytochrome b6-f complex are cytochrome b6, subunit IV (17 kDa polypeptide, petD), cytochrome f and the Rieske protein, while the 4 small subunits are PetG, PetL, PetM and PetN. The complex functions as a dimer. Heme is required as a cofactor.

It localises to the plastid. The protein localises to the chloroplast thylakoid membrane. In terms of biological role, component of the cytochrome b6-f complex, which mediates electron transfer between photosystem II (PSII) and photosystem I (PSI), cyclic electron flow around PSI, and state transitions. This is Cytochrome f (petA) from Picea abies (Norway spruce).